A 314-amino-acid chain; its full sequence is Protein YIF1B (314 aa).

M1 carries the N-acetylmethionine modification. A compositionally biased stretch (low complexity) spans 1 to 12 (MHPAGLAAAAAG). Residues 1-55 (MHPAGLAAAAAGTPRLRKWPSKRRIPVSQPGMADPHQLFDDTSSAQSRGYGAQRA) form a disordered region. At 1 to 156 (MHPAGLAAAA…APRFDVNAPD (156 aa)) the chain is on the cytoplasmic side. T13 carries the post-translational modification Phosphothreonine. Residues 15–25 (RLRKWPSKRRI) are compositionally biased toward basic residues. Phosphoserine is present on S65. A helical transmembrane segment spans residues 157–177 (LYIPAMAFITYVLVAGLALGT). At 178-192 (QDRFSPDLLGLQASS) the chain is on the extracellular side. The chain crosses the membrane as a helical span at residues 193–213 (ALAWLTLEVLAILLSLYLVTV). Residues 214-219 (NTDLTT) are Cytoplasmic-facing. A helical transmembrane segment spans residues 220–240 (IDLVAFLGYKYVGMIGGVLMG). Position 241 (L241) is a topological domain, extracellular. Residues 242–262 (LFGKIGYYLVLGWCCVAIFVF) form a helical membrane-spanning segment. The Cytoplasmic portion of the chain corresponds to 263 to 292 (MIRTLRLKILADAAAEGVPVRGARNQLRMY). Residues 293–313 (LTMAVAAAQPMLMYWLTFHLV) form a helical membrane-spanning segment. Residue R314 is a topological domain, extracellular.

Belongs to the YIF1 family. In terms of assembly, interacts with HTR1A (via C-terminus). Interacts with ABCB9 (via TMD0); this interaction allows (but is not essential) the ER-to-Golgi trafficking and strongly depends on a salt bridge within TMD0.

It localises to the endoplasmic reticulum membrane. It is found in the golgi apparatus membrane. Its subcellular location is the endoplasmic reticulum-Golgi intermediate compartment membrane. Its function is as follows. Functions in endoplasmic reticulum to Golgi vesicle-mediated transport and regulates the proper organization of the endoplasmic reticulum and the Golgi. Plays a key role in targeting to neuronal dendrites receptors such as HTR1A. Plays also a role in primary cilium and sperm flagellum assembly probably through protein transport to these compartments. This Homo sapiens (Human) protein is Protein YIF1B.